A 367-amino-acid chain; its full sequence is Heme A synthase (367 aa).

A run of 5 helical transmembrane segments spans residues 25-45 (ALRFWLGFVLLALFCLVLVGG), 111-131 (LIARAIGVIFALPLIYFWLTG), 139-159 (WPLVGILALGGLQGGIGWWMV), 174-194 (LATHLVMACLIFAGCMWIMRG), and 210-230 (GFAAAIAIFSLFQIYLGALVA). His274 contributes to the heme binding site. 3 consecutive transmembrane segments (helical) span residues 276–296 (IGAYTLFALTLINMVIALRAA), 305–325 (AILLFVLVTLQAAIGIATLLM), and 327–347 (VPLHWGLLHQAGALVVFGFAV). His335 lines the heme pocket.

It belongs to the COX15/CtaA family. Type 2 subfamily. Interacts with CtaB. Requires heme b as cofactor.

The protein resides in the cell membrane. The catalysed reaction is Fe(II)-heme o + 2 A + H2O = Fe(II)-heme a + 2 AH2. Its pathway is porphyrin-containing compound metabolism; heme A biosynthesis; heme A from heme O: step 1/1. Its function is as follows. Catalyzes the conversion of heme O to heme A by two successive hydroxylations of the methyl group at C8. The first hydroxylation forms heme I, the second hydroxylation results in an unstable dihydroxymethyl group, which spontaneously dehydrates, resulting in the formyl group of heme A. This chain is Heme A synthase, found in Rhizobium johnstonii (strain DSM 114642 / LMG 32736 / 3841) (Rhizobium leguminosarum bv. viciae).